Consider the following 397-residue polypeptide: F-box protein At5g25290 (397 aa).

The 46-residue stretch at 11–56 (VTLWSEIPMDILRSVFERLSFVDLHRAKIVCSHWYSCSKQSFLRKT) folds into the F-box domain.

The chain is F-box protein At5g25290 from Arabidopsis thaliana (Mouse-ear cress).